A 130-amino-acid polypeptide reads, in one-letter code: Tripartite terminase subunit 2 (130 aa).

Belongs to the herpesviridae TRM2 protein family. Associates with TRM1 and TRM3 to form the tripartite terminase complex.

It is found in the host nucleus. Its function is as follows. Component of the molecular motor that translocates viral genomic DNA in empty capsid during DNA packaging. Forms a tripartite terminase complex together with TRM1 and TRM3 in the host cytoplasm. Once the complex reaches the host nucleus, it interacts with the capsid portal vertex. This portal forms a ring in which genomic DNA is translocated into the capsid. The polypeptide is Tripartite terminase subunit 2 (Homo sapiens (Human)).